The primary structure comprises 302 residues: tRNA pseudouridine synthase B (302 aa).

The active-site Nucleophile is D45.

Belongs to the pseudouridine synthase TruB family. Type 1 subfamily.

The catalysed reaction is uridine(55) in tRNA = pseudouridine(55) in tRNA. Responsible for synthesis of pseudouridine from uracil-55 in the psi GC loop of transfer RNAs. In Francisella tularensis subsp. tularensis (strain WY96-3418), this protein is tRNA pseudouridine synthase B.